The chain runs to 480 residues: UDP-glycosyltransferase 72B2 (480 aa).

Residues Ser277, 347–349 (APQ), 364–372 (HCGWNSTLE), and 386–389 (FAEQ) each bind UDP-alpha-D-glucose.

Belongs to the UDP-glycosyltransferase family.

This Arabidopsis thaliana (Mouse-ear cress) protein is UDP-glycosyltransferase 72B2 (UGT72B2).